We begin with the raw amino-acid sequence, 349 residues long: Dihydroorotate dehydrogenase (quinone) (349 aa).

Residues 67–71 (AGLDK) and Thr-91 contribute to the FMN site. Lys-71 provides a ligand contact to substrate. Residue 116–120 (NRLGF) coordinates substrate. Residues Asn-147 and Asn-180 each coordinate FMN. Substrate is bound at residue Asn-180. The active-site Nucleophile is the Ser-183. Asn-185 contacts substrate. FMN contacts are provided by Lys-225 and Thr-253. Substrate is bound at residue 254 to 255 (NT). FMN is bound by residues Gly-276, Gly-305, and 326–327 (YT).

It belongs to the dihydroorotate dehydrogenase family. Type 2 subfamily. In terms of assembly, monomer. Requires FMN as cofactor.

It localises to the cell membrane. It catalyses the reaction (S)-dihydroorotate + a quinone = orotate + a quinol. It functions in the pathway pyrimidine metabolism; UMP biosynthesis via de novo pathway; orotate from (S)-dihydroorotate (quinone route): step 1/1. Catalyzes the conversion of dihydroorotate to orotate with quinone as electron acceptor. The protein is Dihydroorotate dehydrogenase (quinone) of Bordetella avium (strain 197N).